Reading from the N-terminus, the 545-residue chain is ATP synthase subunit alpha (545 aa).

173–180 (GDRQTGKS) contacts ATP.

It belongs to the ATPase alpha/beta chains family. F-type ATPases have 2 components, CF(1) - the catalytic core - and CF(0) - the membrane proton channel. CF(1) has five subunits: alpha(3), beta(3), gamma(1), delta(1), epsilon(1). CF(0) has three main subunits: a(1), b(2) and c(9-12). The alpha and beta chains form an alternating ring which encloses part of the gamma chain. CF(1) is attached to CF(0) by a central stalk formed by the gamma and epsilon chains, while a peripheral stalk is formed by the delta and b chains.

It is found in the cell membrane. The catalysed reaction is ATP + H2O + 4 H(+)(in) = ADP + phosphate + 5 H(+)(out). Its function is as follows. Produces ATP from ADP in the presence of a proton gradient across the membrane. The alpha chain is a regulatory subunit. The chain is ATP synthase subunit alpha from Pseudarthrobacter chlorophenolicus (strain ATCC 700700 / DSM 12829 / CIP 107037 / JCM 12360 / KCTC 9906 / NCIMB 13794 / A6) (Arthrobacter chlorophenolicus).